We begin with the raw amino-acid sequence, 347 residues long: MNLQGKNVTLYDMSLLXFMHPNPYHITLEQMIAVPTVLDAPRIPLIEITLRDGLGGRSINYVFPAHIDEEYLRAVIPRLKQAKVSALLLPGIGTVDHLNMALDCGVSTILVATHCTEADVSEHHIGMSRMLGADTVGFLMMAHMIRRGKSAGAARLDVKCYGANCIYCTDSAGYMLPDEVSEKIGLLRAELNPATEIGFHGHHNMGMAIANSLAGHRGGASRIDGSVAGLGAGAGNTPLEVFVAVCKRMGVETGIDLYKIMDVAEDLVVPMMDQPIRVDRDALTLGYAGVYSSFLLFAQRAEKKYGVPARDILVELGRRGTVGGQEDMIEDLALDMSRARQKQKVSA.

A Pyruvate carboxyltransferase domain is found at 8 to 261 (VTLYDMSLLX…ETGIDLYKIM (254 aa)). Residue H20 is the Proton acceptor of the active site. Positions 171 and 200 each coordinate substrate. Positions 200 and 202 each coordinate Mn(2+). Y291 lines the substrate pocket.

The protein belongs to the 4-hydroxy-2-oxovalerate aldolase family.

It carries out the reaction (S)-4-hydroxy-2-oxopentanoate = acetaldehyde + pyruvate. In Metapseudomonas furukawaii (Pseudomonas furukawaii), this protein is 4-hydroxy-2-oxovalerate aldolase 1 (salH).